Consider the following 313-residue polypeptide: Pseudouridine kinase (313 aa).

This sequence belongs to the carbohydrate kinase PfkB family.

The catalysed reaction is pseudouridine + ATP = psi-UMP + ADP + H(+). Its function is as follows. Catalyzes the phosphorylation of pseudouridine to pseudouridine 5'-phosphate (PsiMP). This chain is Pseudouridine kinase (psuK), found in Escherichia coli (strain K12).